Reading from the N-terminus, the 102-residue chain is Acid shock protein (102 aa).

The signal sequence occupies residues 1-21 (MKKVLALVVAAAMGLSSAAFA). Positions 22 to 58 (AETAITPAPTATTTKAAPAKTTHHKKQHKAAPAQKAQ) are excised as a propeptide. Over residues 26 to 41 (ITPAPTATTTKAAPAK) the composition is skewed to low complexity. Residues 26–102 (ITPAPTATTT…PAKPAAQPAA (77 aa)) form a disordered region. Residues 80–90 (AAKKHAKKHSH) show a composition bias toward basic residues. A compositionally biased stretch (low complexity) spans 91–102 (QQPAKPAAQPAA).

The protein belongs to the Asr family. Post-translationally, proteolytic processing gives rise to the active protein.

The protein localises to the periplasm. In terms of biological role, required for growth and/or survival at acidic conditions. In Escherichia coli O81 (strain ED1a), this protein is Acid shock protein.